Reading from the N-terminus, the 407-residue chain is Peptidase T (407 aa).

Position 78 (histidine 78) interacts with Zn(2+). The active site involves aspartate 80. Aspartate 141 contributes to the Zn(2+) binding site. Catalysis depends on glutamate 175, which acts as the Proton acceptor. Residues glutamate 176, aspartate 198, and histidine 380 each contribute to the Zn(2+) site.

The protein belongs to the peptidase M20B family. It depends on Zn(2+) as a cofactor.

It is found in the cytoplasm. The enzyme catalyses Release of the N-terminal residue from a tripeptide.. Its function is as follows. Cleaves the N-terminal amino acid of tripeptides. The sequence is that of Peptidase T from Clostridium novyi (strain NT).